Here is a 251-residue protein sequence, read N- to C-terminus: uncharacterized protein (251 aa).

Residues asparagine 149, asparagine 152, and asparagine 207 are each glycosylated (N-linked (GlcNAc...) asparagine; by host). Residues 226–246 (YLIFIIIIIIFIILILLWIKY) form a helical membrane-spanning segment.

Belongs to the glycosyltransferase 32 family.

The protein localises to the membrane. This is an uncharacterized protein from Acanthamoeba polyphaga (Amoeba).